We begin with the raw amino-acid sequence, 261 residues long: Zinc finger protein 664 (261 aa).

9 C2H2-type zinc fingers span residues 3–25 (YKCP…QKIH), 31–53 (HKCD…WRDH), 59–81 (YKCD…KKIH), 87–109 (YKCY…MRVH), 115–137 (YVCS…QRVH), 143–165 (FKCE…QRVH), 171–193 (YKCY…QRVH), 199–221 (YRCC…QRVH), and 227–249 (FKCD…QRVH). Lysine 257 participates in a covalent cross-link: Glycyl lysine isopeptide (Lys-Gly) (interchain with G-Cter in SUMO2).

Belongs to the krueppel C2H2-type zinc-finger protein family.

Its subcellular location is the nucleus. May be involved in transcriptional regulation. The polypeptide is Zinc finger protein 664 (ZNF664) (Pongo abelii (Sumatran orangutan)).